Consider the following 96-residue polypeptide: Pro-glucagon (96 aa).

Basic and acidic residues-rich tracts occupy residues 1–12 (LQDAEDSSRFDA) and 19–30 (EARELSTPKXHS). The disordered stretch occupies residues 1-35 (LQDAEDSSRFDADDTLAGEARELSTPKXHSEGTFS).

The protein belongs to the glucagon family.

It localises to the secreted. Its function is as follows. Plays a key role in glucose metabolism and homeostasis. Regulates blood glucose by increasing gluconeogenesis and decreasing glycolysis. This is Pro-glucagon (gcg) from Myoxocephalus scorpius (Shorthorn sculpin).